The following is a 388-amino-acid chain: MRYFTAGESHGPRLTAIIEGVPAGLSLSAEDINIELKRRQGGYGRGGRMKIESDQVEITSGVRHGKTIGSPITLNVTNRDFKNWEQIMAAQDVEDKIKKQRRLTKPRPGHADLVGGMKYEFEDLRNVLERSSARETTMRVAVGAVAKKLLHELEIEIANHVVNFGGREITSPENLSVQDIRQTAGLSDLSIFDESQAEELRNYIDQIKKAGDTIGGIIETRVEGVPAGLGSYVQYDRKLDAKIAAAVVSINAFKGVEFGLGFEAGKRPGSQVMDEIIWSEDKGYTRSSNQLGGFEGGMTNGEQVIVRGVMKPIPTLYKPLMSIDIESHEPYKASVERSDPTALPAAGVVMENVVATVVAQEICDKFDSDTMNELRDAVASYKKRLSEY.

NADP(+) is bound by residues Arg-39 and Arg-45. Residues 130-132, 251-252, Gly-296, 311-315, and Arg-337 contribute to the FMN site; these read RSS, NA, and KPIPT.

This sequence belongs to the chorismate synthase family. In terms of assembly, homotetramer. FMNH2 is required as a cofactor.

The catalysed reaction is 5-O-(1-carboxyvinyl)-3-phosphoshikimate = chorismate + phosphate. The protein operates within metabolic intermediate biosynthesis; chorismate biosynthesis; chorismate from D-erythrose 4-phosphate and phosphoenolpyruvate: step 7/7. Catalyzes the anti-1,4-elimination of the C-3 phosphate and the C-6 proR hydrogen from 5-enolpyruvylshikimate-3-phosphate (EPSP) to yield chorismate, which is the branch point compound that serves as the starting substrate for the three terminal pathways of aromatic amino acid biosynthesis. This reaction introduces a second double bond into the aromatic ring system. The sequence is that of Chorismate synthase from Lactococcus lactis subsp. lactis (strain IL1403) (Streptococcus lactis).